Consider the following 264-residue polypeptide: Small ribosomal subunit protein eS1 (264 aa).

This sequence belongs to the eukaryotic ribosomal protein eS1 family. Component of the small ribosomal subunit. Mature ribosomes consist of a small (40S) and a large (60S) subunit. The 40S subunit contains about 33 different proteins and 1 molecule of RNA (18S). The 60S subunit contains about 49 different proteins and 3 molecules of RNA (25S, 5.8S and 5S).

It is found in the cytoplasm. The protein is Small ribosomal subunit protein eS1 of Babesia bovis.